A 193-amino-acid chain; its full sequence is dCTP deaminase (193 aa).

Residues 110-115, D128, 136-138, Y171, K178, and Q182 each bind dCTP; these read RSSLAR and VLE. E138 serves as the catalytic Proton donor/acceptor. Positions 169–193 are disordered; it reads RPYNRRQDAKYRDQQGAVASRIDKD.

Belongs to the dCTP deaminase family. In terms of assembly, homotrimer.

It catalyses the reaction dCTP + H2O + H(+) = dUTP + NH4(+). It functions in the pathway pyrimidine metabolism; dUMP biosynthesis; dUMP from dCTP (dUTP route): step 1/2. Its function is as follows. Catalyzes the deamination of dCTP to dUTP. The polypeptide is dCTP deaminase (Citrobacter koseri (strain ATCC BAA-895 / CDC 4225-83 / SGSC4696)).